We begin with the raw amino-acid sequence, 355 residues long: Beta-ketoacyl-[acyl-carrier-protein] synthase III 1 (355 aa).

Active-site residues include Cys122 and His280. The tract at residues 281 to 285 is ACP-binding; that stretch reads QANER. The active site involves Asn311.

It belongs to the thiolase-like superfamily. FabH family. In terms of assembly, homodimer.

Its subcellular location is the cytoplasm. It catalyses the reaction malonyl-[ACP] + acetyl-CoA + H(+) = 3-oxobutanoyl-[ACP] + CO2 + CoA. Its pathway is lipid metabolism; fatty acid biosynthesis. Catalyzes the condensation reaction of fatty acid synthesis by the addition to an acyl acceptor of two carbons from malonyl-ACP. Catalyzes the first condensation reaction which initiates fatty acid synthesis and may therefore play a role in governing the total rate of fatty acid production. Possesses both acetoacetyl-ACP synthase and acetyl transacylase activities. Its substrate specificity determines the biosynthesis of branched-chain and/or straight-chain of fatty acids. The polypeptide is Beta-ketoacyl-[acyl-carrier-protein] synthase III 1 (Streptomyces avermitilis (strain ATCC 31267 / DSM 46492 / JCM 5070 / NBRC 14893 / NCIMB 12804 / NRRL 8165 / MA-4680)).